We begin with the raw amino-acid sequence, 524 residues long: Excitatory amino acid transporter 3 (524 aa).

Residues 1 to 18 (MGKPARKGCDSKRFLKNN) are Cytoplasmic-facing. Residues 19–38 (WLLLSTVVAVVLGIVIGVLV) form a helical membrane-spanning segment. The Extracellular segment spans residues 39 to 61 (REYSNLSTLDKFYFAFPGEILMR). Asn-43 carries an N-linked (GlcNAc...) asparagine glycan. A helical transmembrane segment spans residues 62-82 (MLKLVILPLIVSSMITGVAAL). Residues 83–93 (DSNVSGKIGLR) are Cytoplasmic-facing. Residues 94–114 (AVLYYFCTTIIAVILGIVLVV) form a helical membrane-spanning segment. Residues Tyr-98, Thr-101, and Thr-102 each contribute to the Na(+) site. The Extracellular segment spans residues 115–205 (SIKPGVTQKV…RTKEYRVVGL (91 aa)). N-linked (GlcNAc...) asparagine glycosylation is found at Asn-178 and Asn-195. A helical transmembrane segment spans residues 206-229 (YSDGINVLGLIVFCLVFGLVIGKM). Residues 230 to 238 (GEKGQILVD) are Cytoplasmic-facing. Residues 239 to 266 (FFNALSDATMKIVQIIMCYMPLGILFLI) form a helical membrane-spanning segment. The Extracellular portion of the chain corresponds to 267-286 (AGKIIEVEDWEIFRKLGLYM). A helical transmembrane segment spans residues 287 to 308 (VTVLSGLAIHSIVILPLIYFIV). Over 309–313 (VRKNP) the chain is Cytoplasmic. Positions 314 to 344 (FRFAMGMTQALLTALMISSSSATLPVTFRCA) form an intramembrane region, discontinuously helical. 2 residues coordinate L-aspartate: Ser-331 and Ser-333. The Cytoplasmic segment spans residues 345 to 353 (EEKNRVDKR). A helical transmembrane segment spans residues 354–380 (ITRFVLPVGATINMDGTALYEAVAAVF). Residues Gly-362, Thr-364, Asn-366, and Asp-368 each coordinate Na(+). An L-aspartate-binding site is contributed by Thr-370. The Extracellular segment spans residues 381–393 (IAQLNDMDLSIGQ). The segment at residues 394-427 (IITISVTATAASIGAAGVPQAGLVTMVIVLSAVG) is an intramembrane region (discontinuously helical). The Na(+) site is built by Ser-405, Ile-406, and Ala-408. Val-411 lines the L-aspartate pocket. At 428 to 440 (LPAEDVTLIIAVD) the chain is on the extracellular side. The chain crosses the membrane as a helical span at residues 441 to 462 (WLLDRFRTVVNVLGDAFGTGIV). L-aspartate contacts are provided by Arg-447, Thr-448, and Asn-451. The Na(+) site is built by Asn-451 and Asp-455. Residues 463 to 524 (EKLSKKELEQ…TISFTQTSQF (62 aa)) are Cytoplasmic-facing. A phosphoserine mark is found at Ser-517 and Ser-522.

Belongs to the dicarboxylate/amino acid:cation symporter (DAACS) (TC 2.A.23) family. SLC1A1 subfamily. Homotrimer. Interacts with ARL6IP5. Interacts with RTN2 (via N-terminus); the interaction promotes cell surface expression of SLC1A1. Interacts with SORCS2; this interaction is important for normal expression at the cell membrane. In terms of tissue distribution, brain, but also small intestine, kidney, liver and heart.

Its subcellular location is the cell membrane. It is found in the apical cell membrane. The protein resides in the synapse. It localises to the synaptosome. The protein localises to the early endosome membrane. Its subcellular location is the late endosome membrane. It is found in the recycling endosome membrane. It catalyses the reaction K(+)(in) + L-glutamate(out) + 3 Na(+)(out) + H(+)(out) = K(+)(out) + L-glutamate(in) + 3 Na(+)(in) + H(+)(in). The catalysed reaction is K(+)(in) + L-aspartate(out) + 3 Na(+)(out) + H(+)(out) = K(+)(out) + L-aspartate(in) + 3 Na(+)(in) + H(+)(in). The enzyme catalyses D-aspartate(out) + K(+)(in) + 3 Na(+)(out) + H(+)(out) = D-aspartate(in) + K(+)(out) + 3 Na(+)(in) + H(+)(in). It carries out the reaction K(+)(in) + L-cysteine(out) + 3 Na(+)(out) + H(+)(out) = K(+)(out) + L-cysteine(in) + 3 Na(+)(in) + H(+)(in). In terms of biological role, sodium-dependent, high-affinity amino acid transporter that mediates the uptake of L-glutamate and also L-aspartate and D-aspartate. Can also transport L-cysteine. Functions as a symporter that transports one amino acid molecule together with two or three Na(+) ions and one proton, in parallel with the counter-transport of one K(+) ion. Mediates Cl(-) flux that is not coupled to amino acid transport; this avoids the accumulation of negative charges due to aspartate and Na(+) symport. Plays an important role in L-glutamate and L-aspartate reabsorption in renal tubuli. Plays a redundant role in the rapid removal of released glutamate from the synaptic cleft, which is essential for terminating the postsynaptic action of glutamate. Contributes to glutathione biosynthesis and protection against oxidative stress via its role in L-glutamate and L-cysteine transport. Negatively regulated by ARL6IP5. This chain is Excitatory amino acid transporter 3 (SLC1A1), found in Oryctolagus cuniculus (Rabbit).